The following is a 400-amino-acid chain: PHD finger protein 24 (400 aa).

A lipid anchor (N-myristoyl glycine) is attached at Gly-2. Residues 28–38 (LRDRPSIRRTG) are compositionally biased toward basic and acidic residues. A disordered region spans residues 28–99 (LRDRPSIRRT…PEEFDRTSRF (72 aa)). The residue at position 36 (Arg-36) is an Omega-N-methylarginine. Phosphoserine is present on Ser-43. Thr-47 carries the phosphothreonine modification. Ser-51 carries the phosphoserine modification. A compositionally biased stretch (basic and acidic residues) spans 78-97 (AWERLRDGRGVEPEEFDRTS). A PHD-type zinc finger spans residues 129–190 (NDEMCDVCEV…TGWSCHYCDN (62 aa)).

This Homo sapiens (Human) protein is PHD finger protein 24.